We begin with the raw amino-acid sequence, 359 residues long: Membrane-bound lytic murein transglycosylase C (359 aa).

The N-terminal stretch at 1-16 (MKKYLALALIAPLLIS) is a signal peptide. C17 carries the N-palmitoyl cysteine lipid modification. C17 carries S-diacylglycerol cysteine lipidation.

This sequence belongs to the transglycosylase Slt family.

The protein resides in the cell outer membrane. The enzyme catalyses Exolytic cleavage of the (1-&gt;4)-beta-glycosidic linkage between N-acetylmuramic acid (MurNAc) and N-acetylglucosamine (GlcNAc) residues in peptidoglycan, from either the reducing or the non-reducing ends of the peptidoglycan chains, with concomitant formation of a 1,6-anhydrobond in the MurNAc residue.. Its function is as follows. Murein-degrading enzyme. May play a role in recycling of muropeptides during cell elongation and/or cell division. In Escherichia coli O8 (strain IAI1), this protein is Membrane-bound lytic murein transglycosylase C.